A 364-amino-acid chain; its full sequence is MTHQFPALSPEQKKALSDIAQRIVASGKGILAADESVGTMGNRLQRINVENTEENRRAFREILFSSDASISKSIGGVILFHETLYQKDSSGKPFPAIIKEKGMVVGIKLDAGTAPLAGTNGETTIQGLDKLAERCAQYKKDGADFGKWRAVLKISSTTPSQLAIQENANTLARYASICQQNGLVPIVEPEVLPDGDHDLQRCQYVTEKVLAAVYKALNDHHVYLEGTLLKPNMVTAGHSCPKKYTPQDVAVATVTTLLRTVPAAVPGICFLSGGQSEEEASLNLNAMNQSPLPKPWKLTFSYGRALQASALAAWLGKSENKKAAQEAFCKRAQINSLACRGQYVTSGKTDTAATQSLFTASYTY.

The substrate site is built by R56 and K147. The active-site Proton acceptor is the E188. K230 (schiff-base intermediate with dihydroxyacetone-P) is an active-site residue.

The protein belongs to the class I fructose-bisphosphate aldolase family. As to quaternary structure, homotetramer.

It localises to the cytoplasm. Its subcellular location is the cytoskeleton. It is found in the microtubule organizing center. The protein resides in the centrosome. The protein localises to the centriolar satellite. The catalysed reaction is beta-D-fructose 1,6-bisphosphate = D-glyceraldehyde 3-phosphate + dihydroxyacetone phosphate. The protein operates within carbohydrate degradation; glycolysis; D-glyceraldehyde 3-phosphate and glycerone phosphate from D-glucose: step 4/4. This Gallus gallus (Chicken) protein is Fructose-bisphosphate aldolase B (ALDOB).